The following is a 416-amino-acid chain: UDP-N-acetylglucosamine 1-carboxyvinyltransferase (416 aa).

Residue 22 to 23 coordinates phosphoenolpyruvate; the sequence is KN. Arg92 provides a ligand contact to UDP-N-acetyl-alpha-D-glucosamine. The active-site Proton donor is the Cys116. Cys116 carries the post-translational modification 2-(S-cysteinyl)pyruvic acid O-phosphothioketal. Residues 121 to 125, Asp304, and Ile326 each bind UDP-N-acetyl-alpha-D-glucosamine; that span reads RPVDQ.

The protein belongs to the EPSP synthase family. MurA subfamily.

The protein localises to the cytoplasm. The enzyme catalyses phosphoenolpyruvate + UDP-N-acetyl-alpha-D-glucosamine = UDP-N-acetyl-3-O-(1-carboxyvinyl)-alpha-D-glucosamine + phosphate. It functions in the pathway cell wall biogenesis; peptidoglycan biosynthesis. Cell wall formation. Adds enolpyruvyl to UDP-N-acetylglucosamine. This chain is UDP-N-acetylglucosamine 1-carboxyvinyltransferase, found in Cupriavidus metallidurans (strain ATCC 43123 / DSM 2839 / NBRC 102507 / CH34) (Ralstonia metallidurans).